A 169-amino-acid chain; its full sequence is Phycobiliprotein beta chain (169 aa).

N4-methylasparagine is present on asparagine 72. Residue cysteine 82 participates in (2R,3E)-phycocyanobilin binding.

This sequence belongs to the phycobiliprotein family. As to quaternary structure, heterodimer of an alpha and a beta chain. Contains one covalently linked bilin chromophore.

Its subcellular location is the cellular thylakoid membrane. In terms of biological role, light-harvesting photosynthetic bile pigment-protein from the phycobiliprotein complex. This is a protein functionally equivalent to, but with weaker absorbance than, allophycocyanin beta chain. This is Phycobiliprotein beta chain (apcD) from Mastigocladus laminosus (Fischerella sp.).